A 1040-amino-acid polypeptide reads, in one-letter code: Neprilysin-4 (1040 aa).

The segment at 1–27 (MSRHSQLKLAMPSVHGAPATAPGSPMN) is disordered. Residues 1 to 45 (MSRHSQLKLAMPSVHGAPATAPGSPMNAKARSVKLGLGVNQRTGR) are required for maintaining muscle integrity. Residues 1 to 55 (MSRHSQLKLAMPSVHGAPATAPGSPMNAKARSVKLGLGVNQRTGRVQWCPGLTCC) lie on the Cytoplasmic side of the membrane. Residues 56 to 76 (KMLLLLPVVMLPLTLVLILIM) form a helical; Signal-anchor for type II membrane protein membrane-spanning segment. Topologically, residues 77–1040 (RLDGMLAALQ…MNPQKKCSVW (964 aa)) are extracellular. The Peptidase M13 domain maps to 251-1040 (EEGTREGIRM…MNPQKKCSVW (790 aa)). 4 cysteine pairs are disulfide-bonded: C277-C1025, C285-C985, C452-C700, and C909-C1037. Residues N387, N593, N723, and N819 are each glycosylated (N-linked (GlcNAc...) asparagine). H872 is a Zn(2+) binding site. The active site involves E873. Residue H876 coordinates Zn(2+). N-linked (GlcNAc...) asparagine glycosylation is present at N916. E934 contributes to the Zn(2+) binding site. D938 serves as the catalytic Proton donor. N-linked (GlcNAc...) asparagine glycosylation occurs at N969.

It belongs to the peptidase M13 family. As to quaternary structure, interacts (via intracellular domain) with the putative carbohydrate kinase CG3534. Zn(2+) serves as cofactor. As to expression, expressed in the gonads and testes of adults, and the adult and larval brain (at protein level). In embryos, expressed in the pericardial, muscle founder and glia cells (at protein level). In stage 12 embryos, expressed in specific dorsal muscle founder cells such as DA1 and DO2, and also in the certain pericardial progenitor cells where expression persists throughout embryogenesis. Expressed in the glia cells of the embryonic, larval and adult central nervous system. Expressed in the somatic muscles of larvae, pupae and adults. Isoform A: Detected in the male abdomen (at protein level). Isoform B: Not detected in the male or female abdomen (at protein level).

Its subcellular location is the cell membrane. The protein resides in the sarcoplasmic reticulum. It is found in the cytoplasm. The catalysed reaction is Preferential cleavage of polypeptides between hydrophobic residues, particularly with Phe or Tyr at P1'.. In terms of biological role, metalloendoprotease which cleaves peptides at the amino side of hydrophobic residues - such as the hormones Akh and Dh31, and the neuropeptides Allatostatins (AST1, AST2, AST3 and AST4), Crz, Drosulfakinins (DSK-I and DSK-II), Lk, sNPF and the tachykinin peptides TK-1, TK-2, TK-4 and TK-5. Functions in female fertility, memory formation and may also act in regulating insulin signaling and food intake. Likely to be involved in controlling feeding behavior and the expression of insulin-like peptides by cleaving various regulatory peptides that include certain Drosulfakinins, Allatostatins and tachykinin peptides. Required in females for normal patterns of egg laying and hatching. Required in the dorsal paired medial neurons for the proper formation of long-term (LTM) and middle-term memories (MTM). Also required in the mushroom body neurons where it functions redundantly with neprilysins Nep2 and Nep3, in normal LTM formation. Cleaves angiotensin-1 and tachykinin neuropeptide substance P. Functions in maintaining muscle integrity, possibly independently of its endopeptidase activity. This Drosophila melanogaster (Fruit fly) protein is Neprilysin-4.